The sequence spans 704 residues: Ribosomal RNA large subunit methyltransferase K/L (704 aa).

It belongs to the methyltransferase superfamily. RlmKL family.

Its subcellular location is the cytoplasm. It catalyses the reaction guanosine(2445) in 23S rRNA + S-adenosyl-L-methionine = N(2)-methylguanosine(2445) in 23S rRNA + S-adenosyl-L-homocysteine + H(+). The enzyme catalyses guanosine(2069) in 23S rRNA + S-adenosyl-L-methionine = N(2)-methylguanosine(2069) in 23S rRNA + S-adenosyl-L-homocysteine + H(+). Functionally, specifically methylates the guanine in position 2445 (m2G2445) and the guanine in position 2069 (m7G2069) of 23S rRNA. This Alcanivorax borkumensis (strain ATCC 700651 / DSM 11573 / NCIMB 13689 / SK2) protein is Ribosomal RNA large subunit methyltransferase K/L.